A 188-amino-acid chain; its full sequence is Elongation factor P (188 aa).

It belongs to the elongation factor P family.

It is found in the cytoplasm. It participates in protein biosynthesis; polypeptide chain elongation. In terms of biological role, involved in peptide bond synthesis. Stimulates efficient translation and peptide-bond synthesis on native or reconstituted 70S ribosomes in vitro. Probably functions indirectly by altering the affinity of the ribosome for aminoacyl-tRNA, thus increasing their reactivity as acceptors for peptidyl transferase. The protein is Elongation factor P of Chlorobaculum tepidum (strain ATCC 49652 / DSM 12025 / NBRC 103806 / TLS) (Chlorobium tepidum).